The following is a 1093-amino-acid chain: Leucine-rich repeats and immunoglobulin-like domains protein 1 (1093 aa).

A signal peptide spans 1 to 34 (MARPVRGGLGAPRRSPCLLLLWLLLLRLEPVTAA). Positions 35–68 (AGPRAPCAAACTCAGDSLDCGGRGLAALPGDLPS) constitute an LRRNT domain. Topologically, residues 35 to 794 (AGPRAPCAAA…GCRKDGTTVG (760 aa)) are extracellular. Cys45 and Cys54 are joined by a disulfide. 15 LRR repeats span residues 69 to 90 (WTRS…GFED), 93 to 114 (NLQE…GAAS), 116 to 137 (HVVS…QLKA), 140 to 161 (SLEV…CFPH), 164 to 185 (PIKE…AFDG), 189 to 210 (SLLT…AFKL), 212 to 233 (RLTQ…TFQG), 236 to 257 (SLEV…AFWG), 260 to 281 (KMHV…SLYG), 284 to 305 (ALHQ…GWSF), 308 to 329 (KLHE…SLAE), 332 to 353 (SLSV…AFKG), 356 to 378 (SLRV…SGAF), 383 to 404 (SLSK…AFSG), and 407 to 428 (GLEH…AFVK). Residue Asn74 is glycosylated (N-linked (GlcNAc...) asparagine). A glycan (N-linked (GlcNAc...) asparagine) is linked at Asn150. Asn246 carries N-linked (GlcNAc...) asparagine glycosylation. N-linked (GlcNAc...) asparagine glycosylation is found at Asn292 and Asn318. The 52-residue stretch at 440-491 (DSFLCDCQLKWLPPWLIGRMLQAFVTATCAHPESLKGQSIFSVPPESFVCDD) folds into the LRRCT domain. 4 disulfide bridges follow: Cys444–Cys468, Cys446–Cys489, Cys516–Cys577, and Cys620–Cys672. Ig-like C2-type domains follow at residues 495–594 (PQII…ARLT), 599–688 (PSFT…ATLT), and 693–779 (PSLV…SQLS). A glycan (N-linked (GlcNAc...) asparagine) is linked at Asn684. Cysteines 714 and 763 form a disulfide. Residues 795 to 815 (IFTIAVVSSIVLTSLVWVCII) form a helical membrane-spanning segment. Residues 816–1093 (YQTRKKSEEY…RVPLLLAPKS (278 aa)) are Cytoplasmic-facing. Disordered stretches follow at residues 946 to 983 (AFHP…CSRT) and 1063 to 1093 (PKAC…APKS).

Interacts (via extracellular LRR and Ig-like domains) with EGFR/ERBB1, ERBB2, ERBB3 and ERBB4 (via extracellular domain). The physiological relevance of the interaction is controversial; LRIG1 may have low affinity for EGFR, and interaction may occur only when high levels of both proteins are present. In terms of tissue distribution, widely expressed.

The protein localises to the cell membrane. Its function is as follows. Acts as a feedback negative regulator of signaling by receptor tyrosine kinases, through a mechanism that involves enhancement of receptor ubiquitination and accelerated intracellular degradation. In Homo sapiens (Human), this protein is Leucine-rich repeats and immunoglobulin-like domains protein 1.